The chain runs to 238 residues: 14-3-3 family protein artA (238 aa).

This sequence belongs to the 14-3-3 family.

Its function is as follows. 14-3-3 family protein that plays a role in the morphological differentiation and secondary metabolism biosynthesis. Required for normal fungal morphogenesis in an environment-dependent manner, affecting the balance between production of conidiophores and the formation of sclerotia, resistant structures that are necessary for the dissemination and survival. Acts as a positive regulator of conidiation and a negative regulator of sclerotial production. Also regulates the production of secondary metabolites such as aflatoxin, but also the indole-tetramic acid mycotoxin cyclopiazonic acid (CPA) and ustiloxin, an inhibitor of microtubule assembly. The polypeptide is 14-3-3 family protein artA (Aspergillus flavus (strain ATCC 200026 / FGSC A1120 / IAM 13836 / NRRL 3357 / JCM 12722 / SRRC 167)).